The sequence spans 421 residues: Putative B3 domain-containing protein Os08g0333500 (421 aa).

The segment at residues 1 to 51 is a DNA-binding region (TF-B3); that stretch reads MTVELEKIAGSFFISKGWKTFVHRTGLLSGQYIRFQVLTPSKINVLLFDKK. The segment at 92 to 121 is disordered; it reads SHTSNKETSSDSRTESMTDIPSSSDNSGET. The segment covering 95–107 has biased composition (basic and acidic residues); sequence SNKETSSDSRTES. A compositionally biased stretch (polar residues) spans 108-121; it reads MTDIPSSSDNSGET.

It localises to the nucleus. In Oryza sativa subsp. japonica (Rice), this protein is Putative B3 domain-containing protein Os08g0333500.